A 444-amino-acid chain; its full sequence is Phosphoribosylamine--glycine ligase (444 aa).

The ATP-grasp domain maps to 109–324; it reads RNLFKKYNIK…FLEVCEAIVN (216 aa). An ATP-binding site is contributed by 140 to 202; that stretch reads LTEKGIKAVV…EEKLEGVEFT (63 aa). Mg(2+) contacts are provided by Q282, E294, and N296. Mn(2+) is bound by residues Q282, E294, and N296.

This sequence belongs to the GARS family. The cofactor is Mg(2+). Requires Mn(2+) as cofactor.

The enzyme catalyses 5-phospho-beta-D-ribosylamine + glycine + ATP = N(1)-(5-phospho-beta-D-ribosyl)glycinamide + ADP + phosphate + H(+). It participates in purine metabolism; IMP biosynthesis via de novo pathway; N(1)-(5-phospho-D-ribosyl)glycinamide from 5-phospho-alpha-D-ribose 1-diphosphate: step 2/2. This chain is Phosphoribosylamine--glycine ligase, found in Methanocaldococcus jannaschii (strain ATCC 43067 / DSM 2661 / JAL-1 / JCM 10045 / NBRC 100440) (Methanococcus jannaschii).